Here is a 432-residue protein sequence, read N- to C-terminus: Adenylosuccinate synthetase (432 aa).

GTP is bound by residues 13–19 (GDEGKGK) and 41–43 (GHT). Aspartate 14 (proton acceptor) is an active-site residue. Mg(2+)-binding residues include aspartate 14 and glycine 41. Residues 14 to 17 (DEGK), 39 to 42 (NAGH), threonine 130, arginine 144, glutamine 225, threonine 240, and arginine 304 contribute to the IMP site. The Proton donor role is filled by histidine 42. Position 300–306 (300–306 (ATTGRRR)) interacts with substrate. GTP contacts are provided by residues arginine 306, 332–334 (KLD), and 415–417 (STG).

This sequence belongs to the adenylosuccinate synthetase family. Homodimer. The cofactor is Mg(2+).

The protein localises to the cytoplasm. It catalyses the reaction IMP + L-aspartate + GTP = N(6)-(1,2-dicarboxyethyl)-AMP + GDP + phosphate + 2 H(+). Its pathway is purine metabolism; AMP biosynthesis via de novo pathway; AMP from IMP: step 1/2. Its function is as follows. Plays an important role in the de novo pathway of purine nucleotide biosynthesis. Catalyzes the first committed step in the biosynthesis of AMP from IMP. In Edwardsiella ictaluri (strain 93-146), this protein is Adenylosuccinate synthetase.